Here is a 667-residue protein sequence, read N- to C-terminus: Probable E3 ubiquitin-protein ligase HIP1 (667 aa).

2 disordered regions span residues 142–163 and 285–311; these read NGASQGSELHGGCSHTGSNGQA and TTAGLSSSSYDPSGGNNNSGGSQRSFR. A compositionally biased stretch (low complexity) spans 288-309; the sequence is GLSSSSYDPSGGNNNSGGSQRS. An RING-type; atypical zinc finger spans residues 620–661; sequence CCICQEEYVDGDDLGTLDCGHDFHVGCVRQWLVVKNTCPICK.

This sequence belongs to the RING-type zinc finger family. As to quaternary structure, interacts with HAL3.

It catalyses the reaction S-ubiquitinyl-[E2 ubiquitin-conjugating enzyme]-L-cysteine + [acceptor protein]-L-lysine = [E2 ubiquitin-conjugating enzyme]-L-cysteine + N(6)-ubiquitinyl-[acceptor protein]-L-lysine.. It participates in protein modification; protein ubiquitination. Functionally, probable E3 ubiquitin-protein ligase that functions downstream of HAL3 and is required for HAL3-regulated plant growth. Activation of HIP1 by HAL3 may lead to the degradation of cell cycle suppressors, resulting in enhancement of cell division and plant growth. In Oryza sativa subsp. japonica (Rice), this protein is Probable E3 ubiquitin-protein ligase HIP1 (HIP1).